The chain runs to 225 residues: U2 small nuclear ribonucleoprotein B'' (225 aa).

Positions 7–86 (HTIYINNMND…KPMRIQYAKT (80 aa)) constitute an RRM 1 domain. Residues 100 to 144 (DKEKKKEKKKAKTMEQAAAAANKKPGQGTPNAANTQGTAAPNPQV) form a disordered region. Lys-111 is subject to N6-acetyllysine; alternate. A Glycyl lysine isopeptide (Lys-Gly) (interchain with G-Cter in SUMO2); alternate cross-link involves residue Lys-111. The segment covering 113–123 (MEQAAAAANKK) has biased composition (low complexity). The segment covering 127 to 140 (GTPNAANTQGTAAP) has biased composition (polar residues). The residue at position 151 (Tyr-151) is a Phosphotyrosine. The RRM 2 domain occupies 151–225 (YILFLNNLPE…HAMKITYAKK (75 aa)).

The protein belongs to the RRM U1 A/B'' family. Identified in the spliceosome B complex. Identified in the spliceosome C complex. Present in a spliceosome complex assembled in vitro, and composed of SNRPB2, HPRP8BP and CRNKL1. Contributes to the binding of stem loop IV of U2 snRNA with SNRPP1.

The protein resides in the nucleus. In terms of biological role, involved in pre-mRNA splicing as component of the spliceosome. Associated with sn-RNP U2, where it contributes to the binding of stem loop IV of U2 snRNA. This chain is U2 small nuclear ribonucleoprotein B'' (Snrpb2), found in Mus musculus (Mouse).